Reading from the N-terminus, the 446-residue chain is Glycerol-3-phosphate acyltransferase 3 (446 aa).

Transmembrane regions (helical) follow at residues 25-45 (LPSALGVSLGISEAYMWVLVK), 142-162 (LRLTVVWVIGVIVRYCFLLPL), and 164-184 (FTLAAIGITSMIVGTTVVGQL). The short motif at 232–237 (HTSPID) is the HXXXXD motif element. The helical transmembrane segment at 352–372 (IVSYLLRIMTSWAIVCHVWYM) threads the bilayer. Residues 418 to 446 (FKEEQQKNYSKMLVRNGSQGNLPAGTESD) form a disordered region.

Belongs to the 1-acyl-sn-glycerol-3-phosphate acyltransferase family.

The protein localises to the endoplasmic reticulum membrane. The catalysed reaction is sn-glycerol 3-phosphate + an acyl-CoA = a 1-acyl-sn-glycero-3-phosphate + CoA. It catalyses the reaction a 1-acyl-sn-glycero-3-phosphate + an acyl-CoA = a 1,2-diacyl-sn-glycero-3-phosphate + CoA. The enzyme catalyses dodecanoyl-CoA + sn-glycerol 3-phosphate = 1-dodecanoyl-sn-glycerol 3-phosphate + CoA. It carries out the reaction sn-glycerol 3-phosphate + hexadecanoyl-CoA = 1-hexadecanoyl-sn-glycero-3-phosphate + CoA. The catalysed reaction is sn-glycerol 3-phosphate + (9Z)-octadecenoyl-CoA = 1-(9Z-octadecenoyl)-sn-glycero-3-phosphate + CoA. It catalyses the reaction (9Z,12Z)-octadecadienoyl-CoA + sn-glycerol 3-phosphate = 1-(9Z,12Z)-octadecadienoyl-sn-glycero-3-phosphate + CoA. The enzyme catalyses 1-tetradecanoyl-sn-glycerol 3-phosphate + (9Z)-octadecenoyl-CoA = 1-tetradecanoyl-2-(9Z)-octadecenoyl-sn-glycero-3-phosphate + CoA. It carries out the reaction 1-hexadecanoyl-sn-glycero-3-phosphate + (9Z)-octadecenoyl-CoA = 1-hexadecanoyl-2-(9Z-octadecenoyl)-sn-glycero-3-phosphate + CoA. The catalysed reaction is 1-(9Z-octadecenoyl)-sn-glycero-3-phosphate + (9Z)-octadecenoyl-CoA = 1,2-di-(9Z-octadecenoyl)-sn-glycero-3-phosphate + CoA. It catalyses the reaction 1-(6Z,9Z,12Z-octadecatrienoyl)-sn-glycero-3-phosphate + (9Z)-octadecenoyl-CoA = (6Z,9Z,12Z)-octadecatrienoyl-2-(9Z)-octadecenoyl-sn-glycero-3-phosphate + CoA. The enzyme catalyses 1-(9Z,12Z,15Z)-octadecatrienoyl-sn-glycero-3-phosphate + (9Z)-octadecenoyl-CoA = 1-(9Z,12Z,15Z)-octadecatrienoyl-2-(9Z)-octadecenoyl-sn-glycero-3-phosphate + CoA. It carries out the reaction 1-(9Z-octadecenoyl)-sn-glycero-3-phosphate + tetradecanoyl-CoA = 1-(9Z)-octadecenoyl-2-tetradecanoyl-sn-glycero-3-phosphate + CoA. The catalysed reaction is 1-(9Z-octadecenoyl)-sn-glycero-3-phosphate + hexadecanoyl-CoA = 1-(9Z)-octadecenoyl-2-hexadecanoyl-sn-glycero-3-phosphate + CoA. It catalyses the reaction 1-(9Z-octadecenoyl)-sn-glycero-3-phosphate + octadecanoyl-CoA = 1-(9Z-octadecenoyl)-2-octadecanoyl-sn-glycero-3-phosphate + CoA. The enzyme catalyses 1-(9Z-octadecenoyl)-sn-glycero-3-phosphate + (9Z,12Z)-octadecadienoyl-CoA = 1-(9Z)-octadecenoyl-2-(9Z,12Z)-octadecadienoyl-sn-glycero-3-phosphate + CoA. It carries out the reaction 1-(5Z,8Z,11Z,14Z-eicosatetraenoyl)-sn-glycero-3-phosphate + (9Z)-octadecenoyl-CoA = 1-(5Z,8Z,11Z,14Z)-eicosatetraenoyl-2-(9Z)-octadecenoyl-sn-glycero-3-phosphate + CoA. Its pathway is glycerolipid metabolism; triacylglycerol biosynthesis. It functions in the pathway phospholipid metabolism; CDP-diacylglycerol biosynthesis; CDP-diacylglycerol from sn-glycerol 3-phosphate: step 1/3. Its function is as follows. Converts glycerol-3-phosphate to 1-acyl-sn-glycerol-3-phosphate (lysophosphatidic acid or LPA) by incorporating an acyl moiety at the sn-1 position of the glycerol backbone. Also converts LPA into 1,2-diacyl-sn-glycerol-3-phosphate (phosphatidic acid or PA) by incorporating an acyl moiety at the sn-2 position of the glycerol backbone. Protects cells against lipotoxicity. This Gallus gallus (Chicken) protein is Glycerol-3-phosphate acyltransferase 3.